Consider the following 478-residue polypeptide: Argininosuccinate lyase (478 aa).

This sequence belongs to the lyase 1 family. Argininosuccinate lyase subfamily.

It localises to the cytoplasm. The enzyme catalyses 2-(N(omega)-L-arginino)succinate = fumarate + L-arginine. The protein operates within amino-acid biosynthesis; L-arginine biosynthesis; L-arginine from L-ornithine and carbamoyl phosphate: step 3/3. The protein is Argininosuccinate lyase of Rhodospirillum rubrum (strain ATCC 11170 / ATH 1.1.1 / DSM 467 / LMG 4362 / NCIMB 8255 / S1).